We begin with the raw amino-acid sequence, 92 residues long: Putative defensin-like protein 251 (92 aa).

Residues 1 to 27 (MRCVTSFVVFCILMFFVLNIFTVEVKA) form the signal peptide. 4 cysteine pairs are disulfide-bonded: cysteine 34–cysteine 90, cysteine 45–cysteine 69, cysteine 53–cysteine 82, and cysteine 67–cysteine 84.

It belongs to the DEFL family.

It is found in the secreted. This chain is Putative defensin-like protein 251 (SCRL12), found in Arabidopsis thaliana (Mouse-ear cress).